The primary structure comprises 102 residues: Synaptobrevin-like protein 5 (102 aa).

The v-SNARE coiled-coil homology domain occupies 17 to 77 (KIMRTRRELD…VKIKREMSWK (61 aa)).

This is Synaptobrevin-like protein 5 (snb-5) from Caenorhabditis elegans.